A 131-amino-acid chain; its full sequence is Protein anoxia up-regulated (131 aa).

Residues 1–24 (MVYESGFTTRRTYSSRPVTTSYAV) are compositionally biased toward polar residues. The disordered stretch occupies residues 1-121 (MVYESGFTTR…STTSGNLPGG (121 aa)). Composition is skewed to low complexity over residues 44–53 (SSDYSYTSKS) and 98–116 (TSTT…TTSG).

Concentrated in lamina neurons, first optic lobe neurons and cortical neurons of central brain.

Functionally, plays an important role in the regulation of tissue responsiveness to oxygen deprivation. In Drosophila melanogaster (Fruit fly), this protein is Protein anoxia up-regulated.